A 203-amino-acid polypeptide reads, in one-letter code: FMN-dependent NADH:quinone oxidoreductase 3 (203 aa).

Residues Ser9, 15-17, 95-98, and 139-142 contribute to the FMN site; these read SAS, MYNF, and TAGG.

This sequence belongs to the azoreductase type 1 family. In terms of assembly, homodimer. Requires FMN as cofactor.

It carries out the reaction 2 a quinone + NADH + H(+) = 2 a 1,4-benzosemiquinone + NAD(+). The enzyme catalyses N,N-dimethyl-1,4-phenylenediamine + anthranilate + 2 NAD(+) = 2-(4-dimethylaminophenyl)diazenylbenzoate + 2 NADH + 2 H(+). Functionally, quinone reductase that provides resistance to thiol-specific stress caused by electrophilic quinones. Its function is as follows. Also exhibits azoreductase activity. Catalyzes the reductive cleavage of the azo bond in aromatic azo compounds to the corresponding amines. The polypeptide is FMN-dependent NADH:quinone oxidoreductase 3 (Pseudomonas fluorescens (strain Pf0-1)).